The sequence spans 131 residues: CDGSH iron-sulfur domain-containing protein 2 homolog (131 aa).

The Lumenal portion of the chain corresponds to 1-35 (MQSLSHAVKTSLPNYLSSLPVPDSVGGWFKLSFKD). A helical membrane pass occupies residues 36-58 (WLALIPPTAVVVGIGYISYQALC). At 59–131 (PAAQRKSCSG…NVGPVVIKRN (73 aa)) the chain is on the cytoplasmic side. Cys-97, Cys-99, Cys-108, and His-112 together coordinate [2Fe-2S] cluster.

It belongs to the CISD protein family. CISD2 subfamily. The cofactor is [2Fe-2S] cluster.

It localises to the endoplasmic reticulum membrane. This is CDGSH iron-sulfur domain-containing protein 2 homolog from Drosophila mojavensis (Fruit fly).